Here is a 100-residue protein sequence, read N- to C-terminus: Small ribosomal subunit protein bS6 (100 aa).

Belongs to the bacterial ribosomal protein bS6 family.

In terms of biological role, binds together with bS18 to 16S ribosomal RNA. This Enterococcus faecalis (strain ATCC 700802 / V583) protein is Small ribosomal subunit protein bS6.